A 122-amino-acid chain; its full sequence is Small ribosomal subunit protein uS13 (122 aa).

Positions glycine 95 to lysine 122 are disordered.

The protein belongs to the universal ribosomal protein uS13 family. As to quaternary structure, part of the 30S ribosomal subunit. Forms a loose heterodimer with protein S19. Forms two bridges to the 50S subunit in the 70S ribosome.

Functionally, located at the top of the head of the 30S subunit, it contacts several helices of the 16S rRNA. In the 70S ribosome it contacts the 23S rRNA (bridge B1a) and protein L5 of the 50S subunit (bridge B1b), connecting the 2 subunits; these bridges are implicated in subunit movement. Contacts the tRNAs in the A and P-sites. The sequence is that of Small ribosomal subunit protein uS13 from Nitrobacter winogradskyi (strain ATCC 25391 / DSM 10237 / CIP 104748 / NCIMB 11846 / Nb-255).